The following is a 98-amino-acid chain: uncharacterized protein (98 aa).

The tract at residues 77 to 98 is disordered; the sequence is SERAGEEVPPLAVAGSDDGHDH.

It to M.tuberculosis Rv1991c and Rv3269.

This is an uncharacterized protein from Mycobacterium bovis (strain ATCC BAA-935 / AF2122/97).